Here is a 170-residue protein sequence, read N- to C-terminus: Cysteine-rich venom protein VAR4 (170 aa).

An N-terminal signal peptide occupies residues 1 to 22 (MILLKLYLTLAAILCQSRGTTS). Positions 41–169 (NKHNDLRRTV…PLKYFLVCQY (129 aa)) constitute an SCP domain. 3 disulfides stabilise this stretch: Cys-77/Cys-156, Cys-95/Cys-170, and Cys-151/Cys-167.

This sequence belongs to the CRISP family. Contains 8 disulfide bonds. In terms of tissue distribution, expressed by the venom gland.

Its subcellular location is the secreted. Its function is as follows. Blocks ryanodine receptors, and potassium channels. This Varanus acanthurus (Ridge-tailed monitor) protein is Cysteine-rich venom protein VAR4.